A 184-amino-acid polypeptide reads, in one-letter code: Large ribosomal subunit protein uL22 (184 aa).

This sequence belongs to the universal ribosomal protein uL22 family.

The chain is Large ribosomal subunit protein uL22 (RPL17) from Yarrowia lipolytica (strain CLIB 122 / E 150) (Yeast).